Reading from the N-terminus, the 504-residue chain is UNC93-like protein C922.05c (504 aa).

Helical transmembrane passes span 64-84 (IIVS…SGLG), 97-116 (ANVA…GSIC), 123-145 (LTLA…YKHV), 149-169 (GFVI…WAAQ), 186-206 (IAIF…VPLA), 219-239 (GTYA…LFMV), 275-293 (YWVL…FTTY), 310-330 (LNNL…ALFL), 343-363 (VGWG…LAFQ), 391-411 (FLYI…YWII), and 452-472 (YFAS…PVIW).

This sequence belongs to the unc-93 family.

Its subcellular location is the cytoplasm. It localises to the membrane. This is UNC93-like protein C922.05c from Schizosaccharomyces pombe (strain 972 / ATCC 24843) (Fission yeast).